The sequence spans 151 residues: Decarboxylase nsrE (151 aa).

Residues 31–126 (AGMTEEDYHN…VGDHENFADT (96 aa)) form the EthD domain.

Belongs to the tpcK family.

The enzyme catalyses atrochrysone carboxylate + H(+) = atrochrysone + CO2. Its pathway is secondary metabolite biosynthesis. Its function is as follows. Decarboxylase; part of the gene cluster that mediates the biosynthesis of the tetrahydroxanthone dimer neosartorin, which exhibits antibacterial activity. The two different monomeric units appear to be synthesized by the same set of enzymes, among which the Baeyer-Villiger monooxygenase nsrF is the key enzyme for the divergence of the biosynthetic routes. The pathway begins with the synthesis of atrochrysone thioester by the polyketide synthase nsrB. The atrochrysone carboxyl ACP thioesterase nsrC then breaks the thioester bond and releases the atrochrysone carboxylic acid from AacuL. Atrochrysone carboxylic acid is decarboxylated by the decarboxylase nsrE, and oxidized by the anthrone oxygenase nsrD to yield emodin. Emodin is then reduced to emodin hydroquinone by the oxidoreductase nsrR. A-ring reduction by the short chain dehydrogenase nsrJ, dehydration by the scytalone dehydratase-like protein nsrI and probable spontaneous re-oxidation, results in overall deoxygenation to chrysophanol. The Baeyer-Villiger monooxygenase nsrF accepts chrysophanol as a substrate to insert one oxygen atom at two different positions to yield the precursors of both monomric units. NsrF is promiscuous/flexible in interacting with the 2 (non methylated and methylated) aromatic rings of chrysophanol, thus diverging the biosynthetic pathway at this point. After the hydrolysis of the lactones, methylesterification by the methyltransferase nsrG yields respectively moniliphenone and 2,2',6'-trihydroxy-4-methyl-6-methoxya-cyldiphenylmethanone. The next steps are the hydroxylation by the FAD-dependent monooxygenase nsrK, followed by isomerization by the monooxygenase nsrQ. The short chain dehydrogenase/reductase nsrO then catalyzes the C-5 ketoreduction to give the xanthone skeleton of blennolide C and 5-acetylblennolide A. The acetyltransferase nsrL has a strict substrate specificity and uses only blennolide A but not blennolide C to yield 5-acetylblennolide A as the single-acetylated product. In the final step of the biosynthesis, the heterodimerization of the 2 xanthones, blennolide C and 5-acetylblennolide A, is catalyzed by the cytochrome P450 monooxygenase nsrP. NsrP can utilize at least three different xanthones as its substrates to perform the dimerization reaction. This is Decarboxylase nsrE from Aspergillus novofumigatus (strain IBT 16806).